Reading from the N-terminus, the 402-residue chain is GTPase HflX (402 aa).

One can recognise a Hflx-type G domain in the interval 181–350 (DTVGLIGYTN…MIIEHLNLSI (170 aa)). GTP-binding positions include 187 to 194 (GYTNAGKT), 212 to 216 (FTTLT), 233 to 236 (DTVG), 300 to 303 (NKVD), and 328 to 330 (SAK). Mg(2+)-binding residues include Thr194 and Thr214.

The protein belongs to the TRAFAC class OBG-HflX-like GTPase superfamily. HflX GTPase family. In terms of assembly, monomer. Associates with the 50S ribosomal subunit. Mg(2+) is required as a cofactor.

It is found in the cytoplasm. Functionally, GTPase that associates with the 50S ribosomal subunit and may have a role during protein synthesis or ribosome biogenesis. The protein is GTPase HflX of Methanocaldococcus jannaschii (strain ATCC 43067 / DSM 2661 / JAL-1 / JCM 10045 / NBRC 100440) (Methanococcus jannaschii).